A 272-amino-acid polypeptide reads, in one-letter code: Small ribosomal subunit protein uS2 (272 aa).

The span at 224 to 233 shows a compositional bias: basic and acidic residues; it reads EGKKAREERQ. The interval 224–272 is disordered; it reads EGKKAREERQLAAAKDAAGDAKPEAEEAPAAAEAEEAPAAEAEEAPAAE. Residues 256-272 are compositionally biased toward acidic residues; sequence EAEEAPAAEAEEAPAAE.

The protein belongs to the universal ribosomal protein uS2 family.

This is Small ribosomal subunit protein uS2 from Corynebacterium glutamicum (strain ATCC 13032 / DSM 20300 / JCM 1318 / BCRC 11384 / CCUG 27702 / LMG 3730 / NBRC 12168 / NCIMB 10025 / NRRL B-2784 / 534).